Here is a 405-residue protein sequence, read N- to C-terminus: MENIMTLPKIKQVRAWFTGGATAEKGAGGGDYHDQGANHWIDDHIATPMSKYREYEQSRQSFGINVLGTLIVEVEAENGQTGFAVSTAGEMGCFIVEKHLNRFIEGKCVSDIKLIHDQMLNATLYYSGSGGLVMNTISCVDLALWDLFGKVVGLPVYKLLGGAVRDEIQFYATGARPDLAKEMGFIGGKMPTHWGPHDGDAGIRKDAAMVADMREKCGEDFWLMLDCWMSQDVNYAIKLAHACAPYNLKWIEECLPPQQYEGYRELKHNAPAGMMVTSGEHHGTLQSFRTLSETGIDIMQPDVGWCGGLTTLVEIAAIAKSRGQLVVPHGSSVYSHHAVITFTNTPFSEFLMTSPDCSTMRPQFDPILLNEPVPVNGRIHKSVLDKPGFGVELNRDCNLNPPYSH.

Substrate is bound by residues histidine 33 and arginine 59. Residues aspartate 226, glutamate 252, and glutamate 280 each coordinate Mg(2+). Histidine 329 acts as the Proton acceptor in catalysis. Glutamate 349 is a substrate binding site.

Belongs to the mandelate racemase/muconate lactonizing enzyme family. RhamD subfamily. Homooctamer; tetramer of dimers. The cofactor is Mg(2+).

The enzyme catalyses L-rhamnonate = 2-dehydro-3-deoxy-L-rhamnonate + H2O. Its function is as follows. Catalyzes the dehydration of L-rhamnonate to 2-keto-3-deoxy-L-rhamnonate (KDR). The chain is L-rhamnonate dehydratase from Escherichia coli O81 (strain ED1a).